The chain runs to 592 residues: Serine/threonine-protein kinase ksg1 (592 aa).

Residues 1–10 (MRNTHNPNET) are compositionally biased toward polar residues. The interval 1–92 (MRNTHNPNET…NPSSGASTPN (92 aa)) is disordered. The segment covering 11–22 (EASEDAENDTQS) has biased composition (acidic residues). Residues 27 to 37 (SFDHGSSEKLN) are compositionally biased toward basic and acidic residues. The segment covering 42 to 68 (PKTQNSAIPQSNALNTTPNESTSQIDS) has biased composition (polar residues). 2 positions are modified to phosphoserine: S64 and S69. Over residues 80–92 (STPNPSSGASTPN) the composition is skewed to polar residues. Residues 99-366 (FKFGEILGEG…VDEIHQHPFF (268 aa)) form the Protein kinase domain. ATP-binding positions include 109–111 (SYS) and K128. The PIF-pocket stretch occupies residues 130–175 (LDKRHIIKEKKEKYVNIEKEALCILSKHPGFIKLFYTFQDAHNLYF). Residues 178-180 (SLA) and E184 contribute to the ATP site. Residue D223 is the Proton acceptor of the active site. Residues E227 and D241 each contribute to the ATP site. The region spanning 461–572 (ISKIGTLNVY…ELLDKASSIS (112 aa)) is the PH domain.

The protein belongs to the protein kinase superfamily. AGC Ser/Thr protein kinase family. PDPK1 subfamily.

Its subcellular location is the cytoplasm. It catalyses the reaction L-seryl-[protein] + ATP = O-phospho-L-seryl-[protein] + ADP + H(+). The catalysed reaction is L-threonyl-[protein] + ATP = O-phospho-L-threonyl-[protein] + ADP + H(+). Functionally, involved in the control of sexual development and cell growth under stressed conditions. Phosphorylates AGC kinase gad8 at 'Thr-387', activating gad8 kinase activity and promoting sexual development. Phosphorylates AGC kinase psk1 at 'Ser-248', activating psk1 kinase activity and promoting phosphorylation of ribosomal protein S6. In Schizosaccharomyces pombe (strain 972 / ATCC 24843) (Fission yeast), this protein is Serine/threonine-protein kinase ksg1.